The chain runs to 495 residues: Glutamyl-tRNA(Gln) amidotransferase subunit A (495 aa).

Active-site charge relay system residues include lysine 75 and serine 150. Catalysis depends on serine 174, which acts as the Acyl-ester intermediate.

This sequence belongs to the amidase family. GatA subfamily. In terms of assembly, heterotrimer of A, B and C subunits.

The enzyme catalyses L-glutamyl-tRNA(Gln) + L-glutamine + ATP + H2O = L-glutaminyl-tRNA(Gln) + L-glutamate + ADP + phosphate + H(+). Its function is as follows. Allows the formation of correctly charged Gln-tRNA(Gln) through the transamidation of misacylated Glu-tRNA(Gln) in organisms which lack glutaminyl-tRNA synthetase. The reaction takes place in the presence of glutamine and ATP through an activated gamma-phospho-Glu-tRNA(Gln). This chain is Glutamyl-tRNA(Gln) amidotransferase subunit A, found in Ralstonia nicotianae (strain ATCC BAA-1114 / GMI1000) (Ralstonia solanacearum).